The sequence spans 117 residues: V-type sodium ATPase subunit F (117 aa).

Residues 1-20 (MARILTRIKEAEENNQKKEE) form a disordered region. The span at 7-20 (RIKEAEENNQKKEE) shows a compositional bias: basic and acidic residues.

This sequence belongs to the V-ATPase G subunit family.

Functionally, involved in ATP-driven sodium extrusion. This is V-type sodium ATPase subunit F (ntpF) from Enterococcus hirae (strain ATCC 9790 / DSM 20160 / JCM 8729 / LMG 6399 / NBRC 3181 / NCIMB 6459 / NCDO 1258 / NCTC 12367 / WDCM 00089 / R).